Consider the following 194-residue polypeptide: UPF0301 protein FTM_0963 (194 aa).

It belongs to the UPF0301 (AlgH) family.

The polypeptide is UPF0301 protein FTM_0963 (Francisella tularensis subsp. mediasiatica (strain FSC147)).